Here is a 241-residue protein sequence, read N- to C-terminus: MLVVPAIDLFRGKVARMVKGKKENTIFYEKDPAELVKKLIEEGFTLIHVVDLSKAIENSVENFPVLERLSEFAEHIQIGGGIRSFDYAERLRKLGYKRQIVSSKVLEDPSFLKFLKEIDVEPVFSLDTRGGKVAFKGWLAEEEIDPISLLKRLKEYGLEEIVHTEIEKDGTLQEHDFSLTRKIAIEAEVNVFAAGGISSENSLKTAQRVHRETNGLLKGVIVGRAFLEGILTVEVMKRYAR.

D8 acts as the Proton acceptor in catalysis. Catalysis depends on D127, which acts as the Proton donor.

This sequence belongs to the HisA/HisF family.

It localises to the cytoplasm. The catalysed reaction is 1-(5-phospho-beta-D-ribosyl)-5-[(5-phospho-beta-D-ribosylamino)methylideneamino]imidazole-4-carboxamide = 5-[(5-phospho-1-deoxy-D-ribulos-1-ylimino)methylamino]-1-(5-phospho-beta-D-ribosyl)imidazole-4-carboxamide. The protein operates within amino-acid biosynthesis; L-histidine biosynthesis; L-histidine from 5-phospho-alpha-D-ribose 1-diphosphate: step 4/9. The polypeptide is 1-(5-phosphoribosyl)-5-[(5-phosphoribosylamino)methylideneamino] imidazole-4-carboxamide isomerase (Thermotoga petrophila (strain ATCC BAA-488 / DSM 13995 / JCM 10881 / RKU-1)).